A 370-amino-acid chain; its full sequence is Tyrosyl-DNA phosphodiesterase 2 (370 aa).

Residue methionine 1 is modified to N-acetylmethionine. Positions 1 to 32 (MASGSSSDAAEPAGPAGRAASAPEAAQAEEDR) are disordered. Over residues 9-26 (AAEPAGPAGRAASAPEAA) the composition is skewed to low complexity. A Glycyl lysine isopeptide (Lys-Gly) (interchain with G-Cter in SUMO2) cross-link involves residue lysine 34. Threonine 99 carries the phosphothreonine; by ACVR1B modification. The segment at 130–134 (NIDGL) is interaction with 5' end of substrate DNA. 2 residues coordinate Mg(2+): aspartate 132 and glutamate 162. Residues 236 to 241 (HLESTR) are interaction with 5' end of substrate DNA. Aspartate 272 (proton donor/acceptor) is an active-site residue. 2 interaction with 5' end of substrate DNA regions span residues 274–276 (NLR) and 315–321 (LRIPAAY).

The protein belongs to the CCR4/nocturin family. In terms of assembly, interacts with TRAF2, TRAF3, TRAF5, TRAF6, TNFRSF8/CD30, TNFRSF5/CD40, TNFRSF1B/TNF-R75, ETS1, ETS2, FLI1, SMAD3 and ACVR1B/ALK4. Mg(2+) is required as a cofactor. It depends on Mn(2+) as a cofactor. In terms of processing, ubiquitinated by TRAF6. Widely expressed. Expressed in whole brain, cerebellum, quiescent cortical astrocytes and cerebellar granule neurons.

Its subcellular location is the nucleus. The protein resides in the PML body. The protein localises to the nucleolus. It is found in the cytoplasm. DNA repair enzyme that can remove a variety of covalent adducts from DNA through hydrolysis of a 5'-phosphodiester bond, giving rise to DNA with a free 5' phosphate. Catalyzes the hydrolysis of dead-end complexes between DNA and the topoisomerase 2 (TOP2) active site tyrosine residue. The 5'-tyrosyl DNA phosphodiesterase activity can enable the repair of TOP2-induced DNA double-strand breaks/DSBs without the need for nuclease activity, creating a 'clean' DSB with 5'-phosphate termini that are ready for ligation. Thereby, protects the transcription of many genes involved in neurological development and maintenance from the abortive activity of TOP2. Hydrolyzes 5'-phosphoglycolates on protruding 5' ends on DSBs due to DNA damage by radiation and free radicals. Has preference for single-stranded DNA or duplex DNA with a 4 base pair overhang as substrate. Also has 3'-tyrosyl DNA phosphodiesterase activity, but less efficiently and much slower than TDP1. Constitutes the major if not only 5'-tyrosyl-DNA phosphodiesterase in cells. Also acts as an adapter by participating in the specific activation of MAP3K7/TAK1 in response to TGF-beta: associates with components of the TGF-beta receptor-TRAF6-TAK1 signaling module and promotes their ubiquitination dependent complex formation. Involved in non-canonical TGF-beta induced signaling routes. May also act as a negative regulator of ETS1 and may inhibit NF-kappa-B activation. Acts as a regulator of ribosome biogenesis following stress. This Mus musculus (Mouse) protein is Tyrosyl-DNA phosphodiesterase 2 (Tdp2).